Consider the following 218-residue polypeptide: Calcineurin B-like protein 5 (218 aa).

EF-hand domains follow at residues 35–69 (EVEALYDLFRKLSNSIIKDGLIHKEEFHLALFRNK), 70–105 (KTNLFVDRVFDLFDQKGNGVIEFDEFVRSLSVFHPD), 107–142 (PEEQKAGFAFKLYDLRQTGFIERHELKEMVLALLDE), and 151–186 (AVEMIVDRTFDQADTKGDERIDQEEWNEFVKNNPYV).

This sequence belongs to the calcineurin regulatory subunit family. In terms of assembly, homodimer. Expressed at low levels in roots, shoots, culms, leaves and young spikelets.

Its function is as follows. Acts as a calcium sensor. CBL proteins interact with CIPK serine-threonine protein kinases. Binding of a CBL protein to the regulatory NAF domain of a CIPK protein lead to the activation of the kinase in a calcium-dependent manner. This Oryza sativa subsp. japonica (Rice) protein is Calcineurin B-like protein 5 (CBL5).